The sequence spans 546 residues: Alpha-taxilin (546 aa).

Disordered regions lie at residues 1–170 and 482–546; these read MKNQ…GLGK and NKRV…SARA. Polar residues predominate over residues 11 to 21; it reads AKQSNPKSSPG. Composition is skewed to basic and acidic residues over residues 70-80 and 143-158; these read DVSEELSRQLE and EEIR…DHRR. Ser-72 is subject to Phosphoserine. Residues 186–491 adopt a coiled-coil conformation; that stretch reads EEKLAALCKK…NKRVQDLSAG (306 aa). Position 515 is a phosphoserine (Ser-515). A compositionally biased stretch (polar residues) spans 530–546; sequence TEASGQTGPQEPTSARA.

This sequence belongs to the taxilin family. In terms of assembly, binds to the C-terminal coiled coil region of syntaxin family members STX1A, STX3A and STX4A, but not when these proteins are complexed with SNAP25, VAMP2 or STXBP1, suggesting that it interacts with syntaxins that do not form the SNARE complex. As to expression, ubiquitous, with much higher expression in heart, kidney, liver and pancreas.

Its function is as follows. May be involved in intracellular vesicle traffic and potentially in calcium-dependent exocytosis in neuroendocrine cells. The sequence is that of Alpha-taxilin (TXLNA) from Homo sapiens (Human).